A 207-amino-acid polypeptide reads, in one-letter code: Small ribosomal subunit protein uS4 (207 aa).

Residues 96–156 (SRLDNVVYRM…KKSHNQSRIY (61 aa)) form the S4 RNA-binding domain.

This sequence belongs to the universal ribosomal protein uS4 family. As to quaternary structure, part of the 30S ribosomal subunit. Contacts protein S5. The interaction surface between S4 and S5 is involved in control of translational fidelity.

One of the primary rRNA binding proteins, it binds directly to 16S rRNA where it nucleates assembly of the body of the 30S subunit. In terms of biological role, with S5 and S12 plays an important role in translational accuracy. The polypeptide is Small ribosomal subunit protein uS4 (Blochmanniella floridana).